The following is a 150-amino-acid chain: Large ribosomal subunit protein uL15 (150 aa).

The interval 12–43 is disordered; that stretch reads AKKRKKRVGCGESSGHGKTSGRGHKGQKARAG. A compositionally biased stretch (basic residues) spans 30 to 39; that stretch reads TSGRGHKGQK.

It belongs to the universal ribosomal protein uL15 family. In terms of assembly, part of the 50S ribosomal subunit.

In terms of biological role, binds to the 23S rRNA. This Methylacidiphilum infernorum (isolate V4) (Methylokorus infernorum (strain V4)) protein is Large ribosomal subunit protein uL15.